The primary structure comprises 467 residues: Cysteine--tRNA ligase (467 aa).

A Zn(2+)-binding site is contributed by C30. Residues 32-42 (PTVYNYIHIGN) carry the 'HIGH' region motif. Zn(2+) contacts are provided by C210, H235, and E239. The 'KMSKS' region signature appears at 267–271 (KMSKS). Residue K270 participates in ATP binding. Phosphoserine is present on S271.

Belongs to the class-I aminoacyl-tRNA synthetase family. In terms of assembly, monomer. Zn(2+) serves as cofactor.

Its subcellular location is the cytoplasm. It catalyses the reaction tRNA(Cys) + L-cysteine + ATP = L-cysteinyl-tRNA(Cys) + AMP + diphosphate. This is Cysteine--tRNA ligase from Geobacillus thermodenitrificans (strain NG80-2).